An 869-amino-acid polypeptide reads, in one-letter code: Speckle targeted PIP5K1A-regulated poly(A) polymerase (869 aa).

The Matrin-type zinc finger occupies 16 to 46 (FRCCLCHVTTANRPSLDAHLGGRKHRHLVEL). In terms of domain architecture, RRM spans 56–128 (RSVFVSGFPR…HRLRVRPREQ (73 aa)). Residues 111-147 (QPQHTLGGHRLRVRPREQKEFQSPASKSPKGAAPDSH) are disordered. Residue serine 205 coordinates ATP. Mg(2+)-binding residues include aspartate 216 and aspartate 218. Residues aspartate 216 and aspartate 218 each coordinate UTP. Residues 252-315 (QALACTPASP…PASPLQEDRG (64 aa)) form a disordered region. Positions 259-269 (ASPPDSQPPSP) are enriched in pro residues. Residues 279–290 (TPSSSLAPQTPD) are compositionally biased toward polar residues. Asparagine 391 serves as a coordination point for ATP. UTP is bound by residues asparagine 391, arginine 413, tyrosine 431, and histidine 548. One can recognise a PAP-associated domain in the interval 490–548 (LSSLLAQFFSCVSCWDLRGSLLSLREGQALPVAGDLPSNRWEGLRLGPMNLQDPFDLSH). The tract at residues 597–869 (SSPSSLLSAT…VFLPQALRNL (273 aa)) is KA1; binds the bulging loops of U6 snRNA but is dispensable for terminal uridylyltransferase activity. Composition is skewed to basic and acidic residues over residues 637–648 (GTKRLRSDRGGP) and 660–686 (LKLD…HSED). Disordered regions lie at residues 637–686 (GTKR…HSED) and 720–755 (LATG…TGRG). Residues serine 684 and serine 748 each carry the phosphoserine modification.

This sequence belongs to the DNA polymerase type-B-like family. In terms of assembly, associates with the cleavage and polyadenylation specificity factor (CPSF) complex. Interacts with CPSF1 and CPSF3; the interaction is direct. Interacts with PIP5K1A. Mg(2+) serves as cofactor. The cofactor is Mn(2+). Phosphorylated by CK1 in the proline-rich (Pro-rich) region.

The protein localises to the nucleus. It is found in the nucleolus. It localises to the nucleus speckle. It catalyses the reaction RNA(n) + UTP = RNA(n)-3'-uridine ribonucleotide + diphosphate. The catalysed reaction is RNA(n) + ATP = RNA(n)-3'-adenine ribonucleotide + diphosphate. Its activity is regulated as follows. Adenylyltransferase activity is specifically phosphatidylinositol 4,5-bisphosphate (PtdIns(4,5)P2). Functionally, poly(A) polymerase that creates the 3'-poly(A) tail of specific pre-mRNAs. Localizes to nuclear speckles together with PIP5K1A and mediates polyadenylation of a select set of mRNAs, such as HMOX1. In addition to polyadenylation, it is also required for the 3'-end cleavage of pre-mRNAs: binds to the 3'UTR of targeted pre-mRNAs and promotes the recruitment and assembly of the CPSF complex on the 3'UTR of pre-mRNAs. In addition to adenylyltransferase activity, also has uridylyltransferase activity. However, the ATP ratio is higher than UTP in cells, suggesting that it functions primarily as a poly(A) polymerase. Acts as a specific terminal uridylyltransferase for U6 snRNA in vitro: responsible for a controlled elongation reaction that results in the restoration of the four 3'-terminal UMP-residues found in newly transcribed U6 snRNA. Not involved in replication-dependent histone mRNA degradation. This chain is Speckle targeted PIP5K1A-regulated poly(A) polymerase (TUT1), found in Ailuropoda melanoleuca (Giant panda).